We begin with the raw amino-acid sequence, 146 residues long: UPF0260 protein Swoo_2117 (146 aa).

Belongs to the UPF0260 family.

The polypeptide is UPF0260 protein Swoo_2117 (Shewanella woodyi (strain ATCC 51908 / MS32)).